We begin with the raw amino-acid sequence, 408 residues long: Cytotoxic granule-associated RNA binding protein tiar-1 (408 aa).

RRM domains follow at residues 46 to 121, 135 to 213, and 241 to 312; these read RTLY…WAVE, FHVF…WATR, and TSVY…WGKT.

In terms of tissue distribution, expressed in the germline and also in somatic tissues. Expressed in Ggonads and oocytes. Expression is slightly reduced in the most proximal oocytes, especially the -1 oocyte. Aggregates mostly in the head neurons, muscles, intestine, vulval and hypodermal cells during heat shock. Expressed only in the intestine as a response to heat shock, starvation and dietary restriction.

It localises to the cytoplasm. The protein localises to the nucleus. The protein resides in the stress granule. Its function is as follows. Acts downstream of ced-9 in the induction of germline apoptosis under different stress conditions including starvation, osmotic, oxidative, heat shock and UV stress. Plays a role in the formation of stress granules in response to heat shock and oxidative stress but not in response to osmotic stress. Required for the formation of stress granules in the core gonad but may not play a critical role in this process in the oocytes. Plays an important role in the formation of stress granules in the embryo. Protects female germ cells and embryos from heat shock. The protein is Cytotoxic granule-associated RNA binding protein tiar-1 of Caenorhabditis elegans.